The sequence spans 250 residues: 3-deoxy-manno-octulosonate cytidylyltransferase (250 aa).

This sequence belongs to the KdsB family.

It localises to the cytoplasm. It carries out the reaction 3-deoxy-alpha-D-manno-oct-2-ulosonate + CTP = CMP-3-deoxy-beta-D-manno-octulosonate + diphosphate. It participates in nucleotide-sugar biosynthesis; CMP-3-deoxy-D-manno-octulosonate biosynthesis; CMP-3-deoxy-D-manno-octulosonate from 3-deoxy-D-manno-octulosonate and CTP: step 1/1. Its pathway is bacterial outer membrane biogenesis; lipopolysaccharide biosynthesis. In terms of biological role, activates KDO (a required 8-carbon sugar) for incorporation into bacterial lipopolysaccharide in Gram-negative bacteria. This chain is 3-deoxy-manno-octulosonate cytidylyltransferase, found in Xanthomonas campestris pv. campestris (strain 8004).